The following is a 501-amino-acid chain: MAINAQEISALIKKQIENFQPNFDVTETGVVTYIGDGIARARGLDNAMSGELLEFSNGAFGMAQNLESNDVGIIILGEFSTIREGDVVKRTGKIMEVPVGEALIGRVVNPLGQPVDGLGDIATTGFRPVEAVAPGVMQRKSVSEPLQTGLKAIDALVPIGRGQRELIIGDRQTGKTSVAIDAILNQKGQDMICIYVAIGQKESTVRTQVETLRRYGALDYTIVVTASASQPSPLLFIAPYAGVAMAEEFMYQGKHVLIVYDDLSKQAVAYRELSLLLRRPPGREAYPGDVFYLHSRLLERSAKVSDDLGGGSITALPFIETQAGDISAYIATNVISITDGQIFLQESLFNSGIRPAIDAGSSVSRVGGSAQIKAMKKVAGTLRLDLASYRELEAFTQFGSDLDAATQAKLNRGRRTVEILKQPLHKPLPVEKQVVILYALTHGFLDDVPVNDILAFEEALYDYFDMHYSHLFETIRTTKDLPEEKDLDDAIKAFKDQANFN.

169-176 (GDRQTGKT) serves as a coordination point for ATP.

It belongs to the ATPase alpha/beta chains family. As to quaternary structure, F-type ATPases have 2 components, CF(1) - the catalytic core - and CF(0) - the membrane proton channel. CF(1) has five subunits: alpha(3), beta(3), gamma(1), delta(1), epsilon(1). CF(0) has three main subunits: a(1), b(2) and c(9-12). The alpha and beta chains form an alternating ring which encloses part of the gamma chain. CF(1) is attached to CF(0) by a central stalk formed by the gamma and epsilon chains, while a peripheral stalk is formed by the delta and b chains.

It is found in the cell membrane. The catalysed reaction is ATP + H2O + 4 H(+)(in) = ADP + phosphate + 5 H(+)(out). In terms of biological role, produces ATP from ADP in the presence of a proton gradient across the membrane. The alpha chain is a regulatory subunit. In Streptococcus uberis (strain ATCC BAA-854 / 0140J), this protein is ATP synthase subunit alpha.